Consider the following 917-residue polypeptide: Spermatogenesis-associated protein 31D4 (917 aa).

A helical membrane pass occupies residues phenylalanine 29–leucine 49. Disordered stretches follow at residues glutamate 55–lysine 80, serine 152–leucine 195, and serine 773–serine 798. A compositionally biased stretch (basic residues) spans histidine 63 to valine 74. Over residues serine 152 to alanine 163 the composition is skewed to low complexity. Over residues glutamate 164 to threonine 177 the composition is skewed to polar residues. Residues leucine 782–serine 798 show a composition bias toward basic and acidic residues.

It belongs to the SPATA31 family.

The protein resides in the membrane. In terms of biological role, may play a role in spermatogenesis. The chain is Spermatogenesis-associated protein 31D4 (SPATA31D4) from Homo sapiens (Human).